The primary structure comprises 241 residues: Ribosome-recycling factor, mitochondrial (241 aa).

It belongs to the RRF family.

It localises to the mitochondrion. Its function is as follows. Necessary for protein synthesis in mitochondria. Functions as a ribosome recycling factor in mitochondria. In Kluyveromyces lactis (strain ATCC 8585 / CBS 2359 / DSM 70799 / NBRC 1267 / NRRL Y-1140 / WM37) (Yeast), this protein is Ribosome-recycling factor, mitochondrial (RRF1).